A 225-amino-acid chain; its full sequence is Dimerizing cyclase tstC (225 aa).

The signal sequence occupies residues Met1 to Ala19. N-linked (GlcNAc...) asparagine glycosylation is found at Asn146, Asn195, and Asn217.

It belongs to the dimerizing cyclase tstC family.

The enzyme catalyses 2 [4-(deca-1,8-diyl)-2,5-dioxo-2,5-dihydro-3-furanyl]acetate + H(+) = 2-[(1R,8S,14R,15R)-11-hydroxy-14,15-bis[(6E)-oct-6-en-1-yl]-3,5,9-trioxo-4,10-dioxatetracyclo[9.4.0.0(2,6).0(8,12)]pentadeca-2(6),12-dien-8-yl]acetate + CO2. Its pathway is secondary metabolite biosynthesis. Functionally, dimerizing cyclase; part of the gene cluster that mediates the biosynthesis of the antihypercholesterolemic agents phomoidrides which are dimeric anhydrides. Within the pathway, tstC produces the bicyclo[4.3.1]deca-1,6-diene core of phomoidrides via the dimerization of the monomeric anhydrides leading to prephomoidride. The pathway begins with the highly reducing polyketide synthase tstA that catalyzes the formation of a C12-fatty acyl-ACP, starting from one acetate and 5 malonate units. The hydrolase tstM is involved in the release of the C12-fatty acyl chain from phiA. The alkylcitrate synthase (ACS) tstJ and the alkylcitrate dehydratase (ACDH) tstI then give rise to decarboxylated monomeric anhydrides by coupling the C12-fatty acyl chain with oxalacetic acid. The cyclase tstC is responsible for the dimerization of the monomeric anhydrides which leads to the production of prephomoidride that contains the characteristic bicyclo[4.3.1]deca-1,6-diene system of phomoidrides. Iterative oxidation catalyzed by the alpha-ketoglutarate-dependent dioxygenase tstK produced then phomoidride A. Finally, the methyltransferase tstE converts phomoidride A to phomoidride B via an acetalization reaction. The phosphatidylethanolamine-binding protein tstB and tstN are not essential for dimerization and their functions have still to be determined. The chain is Dimerizing cyclase tstC from Talaromyces stipitatus (strain ATCC 10500 / CBS 375.48 / QM 6759 / NRRL 1006) (Penicillium stipitatum).